A 182-amino-acid chain; its full sequence is NADH-quinone oxidoreductase subunit C 2 (182 aa).

A disordered region spans residues 153-182; that stretch reads YKDKLNPFGAEGPPPTQPDLATNDIPQGGR.

This sequence belongs to the complex I 30 kDa subunit family. NDH-1 is composed of 14 different subunits. Subunits NuoB, C, D, E, F, and G constitute the peripheral sector of the complex.

The protein localises to the cell inner membrane. It catalyses the reaction a quinone + NADH + 5 H(+)(in) = a quinol + NAD(+) + 4 H(+)(out). In terms of biological role, NDH-1 shuttles electrons from NADH, via FMN and iron-sulfur (Fe-S) centers, to quinones in the respiratory chain. The immediate electron acceptor for the enzyme in this species is believed to be ubiquinone. Couples the redox reaction to proton translocation (for every two electrons transferred, four hydrogen ions are translocated across the cytoplasmic membrane), and thus conserves the redox energy in a proton gradient. In Rhizobium meliloti (strain 1021) (Ensifer meliloti), this protein is NADH-quinone oxidoreductase subunit C 2.